We begin with the raw amino-acid sequence, 331 residues long: UDP-N-acetylenolpyruvoylglucosamine reductase (331 aa).

The region spanning 54-221 (RVGGAAELYV…TQATFQLQPG (168 aa)) is the FAD-binding PCMH-type domain. Residue R200 is part of the active site. The active-site Proton donor is the S251. Residue E321 is part of the active site.

This sequence belongs to the MurB family. FAD is required as a cofactor.

Its subcellular location is the cytoplasm. The enzyme catalyses UDP-N-acetyl-alpha-D-muramate + NADP(+) = UDP-N-acetyl-3-O-(1-carboxyvinyl)-alpha-D-glucosamine + NADPH + H(+). Its pathway is cell wall biogenesis; peptidoglycan biosynthesis. In terms of biological role, cell wall formation. The sequence is that of UDP-N-acetylenolpyruvoylglucosamine reductase from Nostoc sp. (strain PCC 7120 / SAG 25.82 / UTEX 2576).